We begin with the raw amino-acid sequence, 314 residues long: Ribonuclease Z (314 aa).

Positions 62, 64, 66, 67, 139, 210, and 268 each coordinate Zn(2+). Asp66 (proton acceptor) is an active-site residue.

This sequence belongs to the RNase Z family. In terms of assembly, homodimer. Zn(2+) is required as a cofactor.

It carries out the reaction Endonucleolytic cleavage of RNA, removing extra 3' nucleotides from tRNA precursor, generating 3' termini of tRNAs. A 3'-hydroxy group is left at the tRNA terminus and a 5'-phosphoryl group is left at the trailer molecule.. Its function is as follows. Zinc phosphodiesterase, which displays some tRNA 3'-processing endonuclease activity. Probably involved in tRNA maturation, by removing a 3'-trailer from precursor tRNA. The sequence is that of Ribonuclease Z from Acaryochloris marina (strain MBIC 11017).